Consider the following 425-residue polypeptide: tRNA(Met) cytidine acetate ligase (425 aa).

ATP is bound by residues 7–20 (IVEY…HLYH), Gly-102, Asn-165, and 190–191 (RI).

It belongs to the TmcAL family.

Its subcellular location is the cytoplasm. It carries out the reaction cytidine(34) in elongator tRNA(Met) + acetate + ATP = N(4)-acetylcytidine(34) in elongator tRNA(Met) + AMP + diphosphate. Functionally, catalyzes the formation of N(4)-acetylcytidine (ac(4)C) at the wobble position of elongator tRNA(Met), using acetate and ATP as substrates. First activates an acetate ion to form acetyladenylate (Ac-AMP) and then transfers the acetyl group to tRNA to form ac(4)C34. This chain is tRNA(Met) cytidine acetate ligase, found in Thermosipho melanesiensis (strain DSM 12029 / CIP 104789 / BI429).